We begin with the raw amino-acid sequence, 700 residues long: Polyribonucleotide nucleotidyltransferase (700 aa).

The Mg(2+) site is built by aspartate 491 and aspartate 497. The KH domain occupies 558–617 (PNYAVIEINPDKIRDVIGKGGATIRQLTEETGAVIDIDDAGTIRIFGENKAATKAAIAKI). The S1 motif domain maps to 627–695 (GKTYEGTVAR…NRGRIKLTMK (69 aa)).

Belongs to the polyribonucleotide nucleotidyltransferase family. Component of the RNA degradosome, which is a multiprotein complex involved in RNA processing and mRNA degradation. Requires Mg(2+) as cofactor.

The protein resides in the cytoplasm. It carries out the reaction RNA(n+1) + phosphate = RNA(n) + a ribonucleoside 5'-diphosphate. In terms of biological role, involved in mRNA degradation. Catalyzes the phosphorolysis of single-stranded polyribonucleotides processively in the 3'- to 5'-direction. This Psychrobacter cryohalolentis (strain ATCC BAA-1226 / DSM 17306 / VKM B-2378 / K5) protein is Polyribonucleotide nucleotidyltransferase.